An 847-amino-acid chain; its full sequence is Mitogen-activated protein kinase kinase kinase 11 (847 aa).

Phosphoserine is present on serine 11. The disordered stretch occupies residues 11-38 (SPLGSWNGSGSGGGGGGGGGRPEGSPKA). Positions 17 to 32 (NGSGSGGGGGGGGGRP) are enriched in gly residues. Residue serine 35 is modified to Phosphoserine. Residues 41–105 (YANPVWTALF…PSNYVSRGGG (65 aa)) form the SH3 domain. A Protein kinase domain is found at 117-379 (LRLEEVIGIG…ASILQQLEAL (263 aa)). ATP is bound by residues 123–131 (IGIGGFGKV) and lysine 144. The active-site Proton acceptor is aspartate 241. Threonine 277 carries the phosphothreonine; by autocatalysis modification. A Phosphoserine; by autocatalysis and MAP4K1 modification is found at serine 281. Serine 394 carries the phosphoserine modification. 2 leucine-zipper regions span residues 403–424 (IQGL…EEEL) and 438–459 (LRRR…ELTL). Phosphoserine is present on residues serine 507, serine 524, serine 548, serine 555, and serine 556. Residues 537 to 643 (PAEPGQAWGR…SSGTPKLIQR (107 aa)) are disordered. Basic and acidic residues predominate over residues 550–562 (RRLEDSSNGERRA). A compositionally biased stretch (low complexity) spans 597 to 609 (SSPLGSPSTPPAL). 3 positions are modified to phosphoserine: serine 654, serine 693, and serine 705. The segment at 655–847 (LGLGRDLQPP…QAPWVPEAGP (193 aa)) is disordered. The span at 676 to 694 (TTPPTPTPAPCPTEPPPSP) shows a compositional bias: pro residues. Phosphothreonine is present on threonine 708. Phosphoserine occurs at positions 724, 727, 740, 748, 758, 770, 789, 793, and 815. Residues 760–773 (PLGLISRPRPSPLR) show a composition bias toward low complexity. The span at 787–799 (RPSPLPSPQPAPR) shows a compositional bias: pro residues. Low complexity predominate over residues 800-816 (RAPWTLFPDSDPFWDSP).

The protein belongs to the protein kinase superfamily. STE Ser/Thr protein kinase family. MAP kinase kinase kinase subfamily. As to quaternary structure, homodimer; undergoes dimerization during activation. Interacts with MAP2K4/MKK4. Interacts with MAP2K7/MKK7. Found in a complex with SH3RF1, RAC1, MAP2K7/MKK7, MAPK8IP1/JIP1 and MAPK8/JNK1. Mg(2+) serves as cofactor. In terms of processing, autophosphorylation on serine and threonine residues within the activation loop plays a role in enzyme activation. Thr-277 is likely to be the main autophosphorylation site. Phosphorylation of Ser-555 and Ser-556 is induced by CDC42. As to expression, expressed in a wide variety of normal and neoplastic tissues including fetal lung, liver, heart and kidney, and adult lung, liver, heart, kidney, placenta, skeletal muscle, pancreas and brain.

It localises to the cytoplasm. Its subcellular location is the cytoskeleton. The protein localises to the microtubule organizing center. The protein resides in the centrosome. The catalysed reaction is L-seryl-[protein] + ATP = O-phospho-L-seryl-[protein] + ADP + H(+). It catalyses the reaction L-threonyl-[protein] + ATP = O-phospho-L-threonyl-[protein] + ADP + H(+). Homodimerization via the leucine zipper domains is required for autophosphorylation and subsequent activation. Functionally, activates the JUN N-terminal pathway. Required for serum-stimulated cell proliferation and for mitogen and cytokine activation of MAPK14 (p38), MAPK3 (ERK) and MAPK8 (JNK1) through phosphorylation and activation of MAP2K4/MKK4 and MAP2K7/MKK7. Plays a role in mitogen-stimulated phosphorylation and activation of BRAF, but does not phosphorylate BRAF directly. Influences microtubule organization during the cell cycle. The protein is Mitogen-activated protein kinase kinase kinase 11 of Homo sapiens (Human).